The primary structure comprises 589 residues: 3-hydroxy-3-methylglutaryl coenzyme A reductase 2-B (589 aa).

Topologically, residues 1 to 35 are lumenal; it reads MDVRRRPVTKTLTAGEPLKSQNQHSSSLKASDALP. The helical transmembrane segment at 36 to 56 threads the bilayer; that stretch reads LPLYLTNGLFFTMFFSVMYFL. Residues 57–79 lie on the Cytoplasmic side of the membrane; it reads LHRWREKIRNSVPLHVVTLSELA. Residues 80-100 form a helical membrane-spanning segment; the sequence is ALVLLVASVIYLLGFFGIGFV. Residues 101–544 lie on the Lumenal side of the membrane; it reads QSLIRPSPDS…SKESPGPNSR (444 aa). Residue Asn256 is glycosylated (N-linked (GlcNAc...) asparagine). Catalysis depends on Glu268, which acts as the Charge relay system. The N-linked (GlcNAc...) asparagine glycan is linked to Asn332. Catalysis depends on charge relay system residues Lys400 and Asp476. Residues 545 to 565 form a helical membrane-spanning segment; the sequence is LLASIVAGSVLAGELSLMSAL. Residues 566–589 lie on the Cytoplasmic side of the membrane; sequence AAGQLVKSHMKFNRSSKDVSKLSS. His574 acts as the Proton donor in catalysis.

This sequence belongs to the HMG-CoA reductase family.

It localises to the endoplasmic reticulum membrane. It catalyses the reaction (R)-mevalonate + 2 NADP(+) + CoA = (3S)-3-hydroxy-3-methylglutaryl-CoA + 2 NADPH + 2 H(+). Its pathway is metabolic intermediate biosynthesis; (R)-mevalonate biosynthesis; (R)-mevalonate from acetyl-CoA: step 3/3. Functionally, catalyzes the synthesis of mevalonate, the specific precursor of all isoprenoid compounds present in plants. Component of the triterpene saponins (e.g. ginsenosides or panaxosides) and phytosterols biosynthetic pathways. Promotes triterpenes accumulation in roots. This chain is 3-hydroxy-3-methylglutaryl coenzyme A reductase 2-B, found in Panax ginseng (Korean ginseng).